We begin with the raw amino-acid sequence, 84 residues long: Large ribosomal subunit protein bL27 (84 aa).

Residues 1 to 11 (MATTKAGGSTK) are compositionally biased toward polar residues. The tract at residues 1–20 (MATTKAGGSTKNGRDSHSKR) is disordered.

Belongs to the bacterial ribosomal protein bL27 family.

The sequence is that of Large ribosomal subunit protein bL27 from Mycoplasmopsis synoviae (strain 53) (Mycoplasma synoviae).